Consider the following 408-residue polypeptide: (R)-2-hydroxyisocaproyl-CoA dehydratase alpha subunit (408 aa).

Glu-55 is a substrate binding site. Positions 84, 117, and 346 each coordinate [4Fe-4S] cluster.

It belongs to the FldB/FldC dehydratase alpha/beta subunit family. Part of the heterodimeric complex HadBC composed of (R)-2-hydroxyisocaproyl-CoA dehydratase alpha (HadB) and beta (HadC) subunit. It depends on [4Fe-4S] cluster as a cofactor.

It catalyses the reaction (R)-2-hydroxy-4-methylpentanoyl-CoA = 4-methylpent-2-enoyl-CoA + H2O. With respect to regulation, activated by HadI. In terms of biological role, involved in the reductive branch of L-leucine fermentation. Catalyzes the irreversible beta/alpha-elimination of water from (R)-2-hydroxyisocaproyl-CoA to yield isocaprenoyl-CoA. This beta/alpha-dehydration depends on the reductive formation of ketyl radicals on the substrate generated by injection of a single electron from the ATP-dependent activator protein HadI. The enzyme is specific for the R-isomer. This Clostridioides difficile (Peptoclostridium difficile) protein is (R)-2-hydroxyisocaproyl-CoA dehydratase alpha subunit.